The following is a 246-amino-acid chain: Purine nucleoside phosphorylase Cgl2154/cg2365 (246 aa).

The Zn(2+) site is built by H68, C107, and H124.

The protein belongs to the purine nucleoside phosphorylase YfiH/LACC1 family. Homodimer. It depends on Cu(2+) as a cofactor. Zn(2+) is required as a cofactor.

The enzyme catalyses adenosine + phosphate = alpha-D-ribose 1-phosphate + adenine. The catalysed reaction is S-methyl-5'-thioadenosine + phosphate = 5-(methylsulfanyl)-alpha-D-ribose 1-phosphate + adenine. It carries out the reaction inosine + phosphate = alpha-D-ribose 1-phosphate + hypoxanthine. It catalyses the reaction adenosine + H2O + H(+) = inosine + NH4(+). Its function is as follows. Purine nucleoside enzyme that catalyzes the phosphorolysis of adenosine and inosine nucleosides, yielding D-ribose 1-phosphate and the respective free bases, adenine and hypoxanthine. Also catalyzes the phosphorolysis of S-methyl-5'-thioadenosine into adenine and S-methyl-5-thio-alpha-D-ribose 1-phosphate. Also has adenosine deaminase activity. The chain is Purine nucleoside phosphorylase Cgl2154/cg2365 from Corynebacterium glutamicum (strain ATCC 13032 / DSM 20300 / JCM 1318 / BCRC 11384 / CCUG 27702 / LMG 3730 / NBRC 12168 / NCIMB 10025 / NRRL B-2784 / 534).